The chain runs to 1020 residues: MGRGAGREYSPAATTAENGGGKKKQKEKELDELKKEVAMDDHKLSLDELGRKYQVDLSKGLTNQRAQDILARDGPNALTPPPTTPEWVKFCRQLFGGFSILLWIGAILCFLAYGIQAAMEDEPSNDNLYLGVVLAAVVIVTGCFSYYQEAKSSKIMDSFKNMVPQQALVVREGEKMQINAEEVVVGDLVEVKGGDRVPADLRIISSHGCKVDNSSLTGESEPQTRSPEFTHENPLETRNICFFSTNCVEGTARGIVIATGDRTVMGRIATLASGLEVGRTPIAMEIEHFIQLITGVAVFLGVSFFVLSLILGYSWLEAVIFLIGIIVANVPEGLLATVTVCLTLTAKRMARKNCLVKNLEAVETLGSTSTICSDKTGTLTQNRMTVAHMWFDNQIHEADTTEDQSGATFDKRSPTWTALSRIAGLCNRAVFKAGQENISVSKRDTAGDASESALLKCIELSCGSVRKMRDRNPKVAEIPFNSTNKYQLSIHEREDNPQSHVLVMKGAPERILDRCSSILVQGKEIPLDKEMQDAFQNAYLELGGLGERVLGFCQLNLPSGKFPRGFKFDTDELNFPTEKLCFVGLMSMIDPPRAAVPDAVGKCRSAGIKVIMVTGDHPITAKAIAKGVGIISEGNETVEDIAARLNIPVSQVNPREAKACVVHGSDLKDMTSEQLDEILKNHTEIVFARTSPQQKLIIVEGCQRQGAIVAVTGDGVNDSPALKKADIGIAMGIAGSDVSKQAADMILLDDNFASIVTGVEEGRLIFDNLKKSIAYTLTSNIPEITPFLLFIIANIPLPLGTVTILCIDLGTDMVPAISLAYEAAESDIMKRQPRNPQTDKLVNERLISMAYGQIGMIQALGGFFTYFVILAENGFLPSRLLGIRLDWDDRSMNDLEDSYGQEWTYEQRKVVEFTCHTAFFASIVVVQWADLIICKTRRNSVFQQGMKNKILIFGLLEETALAAFLSYCPGMGVALRMYPLKVTWWFCAFPYSLLIFIYDEVRKLILRRYPGGWVEKETYY.

Positions methionine 1 to alanine 5 are excised as a propeptide. A disordered region spans residues methionine 1–aspartate 31. Topologically, residues glycine 6 to proline 85 are cytoplasmic. The residue at position 10 (serine 10) is a Phosphoserine. Residues proline 80–proline 82 form an interaction with phosphoinositide-3 kinase region. The chain crosses the membrane as a helical span at residues glutamate 86 to alanine 106. Residues isoleucine 107–tyrosine 129 lie on the Extracellular side of the membrane. The chain crosses the membrane as a helical span at residues leucine 130 to alanine 150. Topologically, residues lysine 151–isoleucine 286 are cytoplasmic. Over residues aspartate 212–proline 227 the composition is skewed to polar residues. The disordered stretch occupies residues aspartate 212 to histidine 231. The helical transmembrane segment at glutamate 287 to valine 306 threads the bilayer. Over leucine 307–alanine 318 the chain is Extracellular. Residues valine 319–alanine 336 form a helical membrane-spanning segment. Residues threonine 337–leucine 769 lie on the Cytoplasmic side of the membrane. Aspartate 374 serves as the catalytic 4-aspartylphosphate intermediate. Phosphoserine occurs at positions 439, 450, and 559. Threonine 570 is subject to Phosphothreonine. A phosphoserine mark is found at serine 587 and serine 672. 2 residues coordinate Mg(2+): aspartate 714 and aspartate 718. The chain crosses the membrane as a helical span at residues lysine 770–leucine 789. At phenylalanine 790 to leucine 799 the chain is on the extracellular side. The chain crosses the membrane as a helical span at residues glycine 800–alanine 820. Topologically, residues tyrosine 821–lysine 840 are cytoplasmic. Serine 826 carries the phosphoserine modification. Residues leucine 841 to phenylalanine 863 form a helical membrane-spanning segment. Topologically, residues phenylalanine 864–cysteine 915 are extracellular. The chain crosses the membrane as a helical span at residues histidine 916 to lysine 935. At threonine 936–asparagine 948 the chain is on the cytoplasmic side. Position 940 is a phosphoserine; by PKA (serine 940). Residues lysine 949 to tyrosine 967 form a helical membrane-spanning segment. At cysteine 968–valine 982 the chain is on the extracellular side. Residues threonine 983–lysine 1003 traverse the membrane as a helical segment. The Cytoplasmic portion of the chain corresponds to leucine 1004–tyrosine 1020.

It belongs to the cation transport ATPase (P-type) (TC 3.A.3) family. Type IIC subfamily. As to quaternary structure, the sodium/potassium-transporting ATPase is composed of a catalytic alpha subunit, an auxiliary non-catalytic beta subunit and an additional regulatory subunit. Interacts with regulatory subunit FXYD1.

It localises to the membrane. The protein resides in the cell membrane. It carries out the reaction K(+)(out) + Na(+)(in) + ATP + H2O = K(+)(in) + Na(+)(out) + ADP + phosphate + H(+). Its function is as follows. This is the catalytic component of the active enzyme, which catalyzes the hydrolysis of ATP coupled with the exchange of sodium and potassium ions across the plasma membrane. This action creates the electrochemical gradient of sodium and potassium, providing the energy for active transport of various nutrients. The protein is Sodium/potassium-transporting ATPase subunit alpha-2 (ATP1A2) of Sus scrofa (Pig).